The sequence spans 164 residues: Phosphopantetheine adenylyltransferase (164 aa).

Substrate is bound at residue Ser-9. ATP-binding positions include 9–10 and His-17; that span reads SF. 3 residues coordinate substrate: Lys-41, Leu-78, and Arg-92. ATP is bound by residues 93-95, Glu-103, and 128-134; these read GLR and GRVITST.

This sequence belongs to the bacterial CoaD family. In terms of assembly, homohexamer. The cofactor is Mg(2+).

The protein resides in the cytoplasm. It carries out the reaction (R)-4'-phosphopantetheine + ATP + H(+) = 3'-dephospho-CoA + diphosphate. It functions in the pathway cofactor biosynthesis; coenzyme A biosynthesis; CoA from (R)-pantothenate: step 4/5. Functionally, reversibly transfers an adenylyl group from ATP to 4'-phosphopantetheine, yielding dephospho-CoA (dPCoA) and pyrophosphate. This chain is Phosphopantetheine adenylyltransferase, found in Bartonella bacilliformis (strain ATCC 35685 / KC583 / Herrer 020/F12,63).